A 328-amino-acid polypeptide reads, in one-letter code: Ubiquitin-conjugating enzyme E2 Z (328 aa).

The UBC core domain occupies 71–225 (QCILRIKRDI…IRHETMRVAV (155 aa)). Cys160 functions as the Glycyl thioester intermediate in the catalytic mechanism. Residues 295-328 (RLREKCPPEDNDGDSDSDTSSSGTDPDSQGSSQP) form a disordered region. Positions 312–328 (DTSSSGTDPDSQGSSQP) are enriched in low complexity.

The protein belongs to the ubiquitin-conjugating enzyme family.

It is found in the cytoplasm. It localises to the nucleus. The catalysed reaction is S-ubiquitinyl-[E1 ubiquitin-activating enzyme]-L-cysteine + [E2 ubiquitin-conjugating enzyme]-L-cysteine = [E1 ubiquitin-activating enzyme]-L-cysteine + S-ubiquitinyl-[E2 ubiquitin-conjugating enzyme]-L-cysteine.. It participates in protein modification; protein ubiquitination. Functionally, catalyzes the covalent attachment of ubiquitin to other proteins. May be involved in apoptosis regulation. The sequence is that of Ubiquitin-conjugating enzyme E2 Z (ube2z) from Danio rerio (Zebrafish).